The following is a 314-amino-acid chain: Oxidoreductase NAD-binding domain-containing protein 1 (314 aa).

An N-terminal signal peptide occupies residues 1–18 (MALVAGSAAYQVLRGVTG). An FAD-binding FR-type domain is found at 63 to 166 (EIISPAKVCG…VGGEFCFDPQ (104 aa)). 180-185 (GVGINP) lines the NAD(+) pocket.

In Xenopus laevis (African clawed frog), this protein is Oxidoreductase NAD-binding domain-containing protein 1 (oxnad1).